A 121-amino-acid polypeptide reads, in one-letter code: Large ribosomal subunit protein uL22 (121 aa).

This sequence belongs to the universal ribosomal protein uL22 family. In terms of assembly, part of the 50S ribosomal subunit.

Functionally, this protein binds specifically to 23S rRNA; its binding is stimulated by other ribosomal proteins, e.g. L4, L17, and L20. It is important during the early stages of 50S assembly. It makes multiple contacts with different domains of the 23S rRNA in the assembled 50S subunit and ribosome. Its function is as follows. The globular domain of the protein is located near the polypeptide exit tunnel on the outside of the subunit, while an extended beta-hairpin is found that lines the wall of the exit tunnel in the center of the 70S ribosome. The protein is Large ribosomal subunit protein uL22 of Paenarthrobacter aurescens (strain TC1).